The sequence spans 447 residues: Protein king tubby (447 aa).

2 stretches are compositionally biased toward low complexity: residues 71 to 92 (GTGP…YSDS) and 157 to 169 (NNNN…NSSS). Residues 71 to 196 (GTGPNVTATS…GGAPDTEGDV (126 aa)) are disordered.

Belongs to the TUB family.

Its subcellular location is the cytoplasm. It localises to the nucleus. The sequence is that of Protein king tubby from Anopheles gambiae (African malaria mosquito).